A 473-amino-acid chain; its full sequence is Vasculin (473 aa).

Disordered stretches follow at residues 1–25 (MAQH…SSLN), 45–169 (RRHN…KSRA), and 191–342 (VGNL…QERD). S49 carries the phosphoserine modification. R87 carries the omega-N-methylarginine modification. The segment covering 93–107 (GSSRSRSSIFHSGKS) has biased composition (low complexity). Residues 119–133 (ETGRKEDKRERKQFE) show a composition bias toward basic and acidic residues. Composition is skewed to polar residues over residues 194-204 (LPSQPVKNGTG) and 251-286 (AFKS…QQPR). Phosphoserine occurs at positions 274, 276, 322, and 381. A compositionally biased stretch (basic and acidic residues) spans 293-329 (MRTDKKSEFLKALKRDRVEEEHEDESRAGSEKDDDSF). A disordered region spans residues 444–473 (GPWKNSTFKPTTENDDTETSSSDTSDDDDV). Residues 456–473 (ENDDTETSSSDTSDDDDV) show a composition bias toward acidic residues.

This sequence belongs to the vasculin family. As to quaternary structure, interacts with GTF2B, GTF2F2, RNA polymerase II and TBP.

The protein resides in the nucleus. Functions as a GC-rich promoter-specific transactivating transcription factor. This is Vasculin (GPBP1) from Pongo abelii (Sumatran orangutan).